We begin with the raw amino-acid sequence, 138 residues long: Phospholipase A2 homolog mojave toxin acidic chain (138 aa).

An N-terminal signal peptide occupies residues 1–40; that stretch reads MRALWIVAVLLVGVEGSLVEFETLIMKIAGRSGISYYSSY. 7 disulfides stabilise this stretch: Cys42/Cys131, Cys44/Cys60, Cys59/Cys111, Cys65/Cys138, Cys66/Cys104, Cys73/Cys97, and Cys91/Cys102. Residues 81–83 constitute a propeptide that is removed on maturation; sequence TYR. Position 84 is a pyrrolidone carboxylic acid (Gln84). The propeptide occupies 120–126; it reads DYKYLRF.

This sequence belongs to the phospholipase A2 family. Group II subfamily. D49 sub-subfamily. As to quaternary structure, heterodimer of an acidic and a basic chain. The acidic subunit is non-toxic, without enzymatic activity and comprises 3 peptides that are cross-linked by 5 disulfide bridges. The basic subunit is toxic, has phospholipase A2 activity and is composed of a single chain. The cofactor is Ca(2+). In terms of tissue distribution, expressed by the venom gland.

It localises to the secreted. Its function is as follows. Snake venom phospholipase A2 (PLA2) that inhibits neuromuscular transmission by blocking acetylcholine release from the nerve termini. The polypeptide is Phospholipase A2 homolog mojave toxin acidic chain (Crotalus scutulatus scutulatus (Mojave rattlesnake)).